A 408-amino-acid chain; its full sequence is MHEVKKVVLAYSGGLDTSVILKWLQDTYQCEVVTFTADIGQGEEVEPARKKALALGIKPENIFIDDLREEFVRDFVFPMFRANAVYEGEYLLGTSIARPLIAKRQIEIANMVGAEAVSHGATGKGNDQVRFELGYYALKPEVKVIAPWREWDLLSREKLLAYAETHGIDISKRKSGASPYSMDANLLHISYEGLALENPAAEPEEDMWLWSNSPEAAPDEAEYIELEYSQGDIVAVNGMAMSPAQVLTRLNQLGGKHGIGRLDIVENRYVGMKSRGCYETPGGTIMLKAHRAIESITLDREVAHLKDELMPKYAKLIYTGYWWAPERRMLQAMIDESQKTVNGWVRLKLYKGNVIVVGRESKTDSLFDPAIATFDEDGGAYNHADAAGFIRLNALRMRIAANARQRRG.

ATP-binding positions include 10-18 (AYSGGLDTS) and alanine 37. Residues tyrosine 90 and serine 95 each coordinate L-citrulline. Position 120 (glycine 120) interacts with ATP. Positions 122, 126, and 127 each coordinate L-aspartate. Asparagine 126 lines the L-citrulline pocket. Positions 130, 181, 190, 266, and 278 each coordinate L-citrulline.

It belongs to the argininosuccinate synthase family. Type 1 subfamily. As to quaternary structure, homotetramer.

It is found in the cytoplasm. It carries out the reaction L-citrulline + L-aspartate + ATP = 2-(N(omega)-L-arginino)succinate + AMP + diphosphate + H(+). The protein operates within amino-acid biosynthesis; L-arginine biosynthesis; L-arginine from L-ornithine and carbamoyl phosphate: step 2/3. This is Argininosuccinate synthase from Laribacter hongkongensis (strain HLHK9).